We begin with the raw amino-acid sequence, 164 residues long: Polygalacturonase (164 aa).

Belongs to the glycosyl hydrolase 28 family.

Its subcellular location is the secreted. The protein localises to the cell wall. It carries out the reaction (1,4-alpha-D-galacturonosyl)n+m + H2O = (1,4-alpha-D-galacturonosyl)n + (1,4-alpha-D-galacturonosyl)m.. The sequence is that of Polygalacturonase from Cupressus sempervirens (Italian cypress).